The chain runs to 461 residues: tRNA (guanine(10)-N(2))-methyltransferase TRMT11 (461 aa).

It belongs to the class I-like SAM-binding methyltransferase superfamily. TRM11 methyltransferase family. In terms of assembly, part of the heterodimeric TRMT11-TRM112 methyltransferase complex; this complex forms an active tRNA methyltransferase, where TRMT112 acts as an activator of the catalytic subunit TRMT11.

The protein resides in the cytoplasm. The catalysed reaction is guanosine(10) in tRNA + S-adenosyl-L-methionine = N(2)-methylguanosine(10) in tRNA + S-adenosyl-L-homocysteine + H(+). In terms of biological role, catalytic subunit of the TRMT11-TRM112 methyltransferase complex, that specifically mediates the S-adenosyl-L-methionine-dependent N(2)-methylation of guanosine nucleotide at position 10 (m2G10) in tRNAs. This is one of the major tRNA (guanine-N(2))-methyltransferases. The polypeptide is tRNA (guanine(10)-N(2))-methyltransferase TRMT11 (Gallus gallus (Chicken)).